The chain runs to 476 residues: Aspartyl/glutamyl-tRNA(Asn/Gln) amidotransferase subunit B (476 aa).

This sequence belongs to the GatB/GatE family. GatB subfamily. As to quaternary structure, heterotrimer of A, B and C subunits.

The catalysed reaction is L-glutamyl-tRNA(Gln) + L-glutamine + ATP + H2O = L-glutaminyl-tRNA(Gln) + L-glutamate + ADP + phosphate + H(+). The enzyme catalyses L-aspartyl-tRNA(Asn) + L-glutamine + ATP + H2O = L-asparaginyl-tRNA(Asn) + L-glutamate + ADP + phosphate + 2 H(+). In terms of biological role, allows the formation of correctly charged Asn-tRNA(Asn) or Gln-tRNA(Gln) through the transamidation of misacylated Asp-tRNA(Asn) or Glu-tRNA(Gln) in organisms which lack either or both of asparaginyl-tRNA or glutaminyl-tRNA synthetases. The reaction takes place in the presence of glutamine and ATP through an activated phospho-Asp-tRNA(Asn) or phospho-Glu-tRNA(Gln). This Enterococcus faecalis (strain ATCC 700802 / V583) protein is Aspartyl/glutamyl-tRNA(Asn/Gln) amidotransferase subunit B.